The following is a 37-amino-acid chain: Large ribosomal subunit protein bL36 (37 aa).

Belongs to the bacterial ribosomal protein bL36 family.

The sequence is that of Large ribosomal subunit protein bL36 from Thermomicrobium roseum (strain ATCC 27502 / DSM 5159 / P-2).